Here is a 992-residue protein sequence, read N- to C-terminus: Aminopeptidase Q (992 aa).

Topologically, residues Gly-2 to Arg-13 are cytoplasmic. A helical; Signal-anchor for type II membrane protein transmembrane segment spans residues Ala-14–Ala-34. Over Ala-35–Thr-992 the chain is Extracellular. Positions Asp-47–Gly-92 are disordered. Residue Asn-133 is glycosylated (N-linked (GlcNAc...) asparagine). Glu-241 is a binding site for substrate. 4 N-linked (GlcNAc...) asparagine glycosylation sites follow: Asn-262, Asn-289, Asn-347, and Asn-361. Ser-380–Asn-384 is a substrate binding site. His-416 lines the Zn(2+) pocket. The active-site Proton acceptor is Glu-417. Zn(2+) is bound by residues His-420 and Glu-439. The active-site Proton donor is Tyr-505. Residues Asn-555, Asn-584, Asn-602, Asn-609, Asn-655, Asn-811, Asn-850, and Asn-889 are each glycosylated (N-linked (GlcNAc...) asparagine).

It belongs to the peptidase M1 family. The cofactor is Zn(2+). Expressed in skin. Expression levels do not differ between dark and light skin areas.

The protein resides in the membrane. In terms of biological role, metalloprotease which may be important for placentation by regulating biological activity of key peptides at the embryo-maternal interface. Involved in coat pigmentation patterns. During skin development, may be required to establish the periodicity of tabby markings, initiating a pre-pattern at or before hair follicle development. This chain is Aminopeptidase Q (LVRN), found in Felis catus (Cat).